Here is a 467-residue protein sequence, read N- to C-terminus: Cilia- and flagella-associated protein 97 (467 aa).

Disordered stretches follow at residues 1–20 (MDRYGNLSDDGEVDHSFFDS), 76–235 (IAKP…DISP), 336–370 (RQAAKPRSKSLTPKKPMSAPTRLYHSAINRQKEQQ), and 412–467 (ALSP…AAWQ). A compositionally biased stretch (acidic residues) spans 124 to 135 (DNYYPDEEDSSE). A compositionally biased stretch (polar residues) spans 162-177 (DFVSTISSSDTEYSDT). Residues 180-194 (DDGASKSSYQSSKGS) are compositionally biased toward low complexity. Over residues 198 to 216 (SPERKPSRSSMRELRHYAE) the composition is skewed to basic and acidic residues. Positions 223–235 (TDVTPLSTPDISP) are enriched in polar residues. Residues 310-387 (KKNFSFSNDE…ALLKRLESVK (78 aa)) are a coiled coil. A compositionally biased stretch (low complexity) spans 421–439 (SVSRLSPSVSSGGFSRMSS).

This sequence belongs to the CFAP97 family.

This chain is Cilia- and flagella-associated protein 97, found in Xenopus tropicalis (Western clawed frog).